The primary structure comprises 388 residues: Mannitol-1-phosphate 5-dehydrogenase (388 aa).

Residue 4–15 (AVHFGAGNIGRG) participates in NAD(+) binding.

It belongs to the mannitol dehydrogenase family.

It catalyses the reaction D-mannitol 1-phosphate + NAD(+) = beta-D-fructose 6-phosphate + NADH + H(+). The chain is Mannitol-1-phosphate 5-dehydrogenase from Lactococcus lactis subsp. cremoris (strain SK11).